The primary structure comprises 63 residues: Gallinacin-4 (63 aa).

The signal sequence occupies residues 1 to 19 (MKILCFFIVLLFVAVHGAV). The propeptide occupies 20 to 25 (GFSRSP). Intrachain disulfides connect C31-C59, C38-C53, and C43-C60.

This sequence belongs to the beta-defensin family. In terms of tissue distribution, strong expression in the bone marrow and testis. Widely expressed. Weak expression in the ovarian stroma, but not expressed in the ovarian follicles.

It is found in the secreted. The protein resides in the cytoplasmic granule. Its function is as follows. Has bactericidal activity. Potent activity against S.typhimurium and S.entiriditis. The polypeptide is Gallinacin-4 (GAL4) (Gallus gallus (Chicken)).